A 189-amino-acid polypeptide reads, in one-letter code: uncharacterized protein (189 aa).

This sequence to M.jannaschii MJ1461.

This is an uncharacterized protein from Methanocaldococcus jannaschii (strain ATCC 43067 / DSM 2661 / JAL-1 / JCM 10045 / NBRC 100440) (Methanococcus jannaschii).